The sequence spans 3097 residues: Neural-cadherin (3097 aa).

Positions 1 to 36 (MAARRCLNQLRQRYITNRFNICTCAIFLISLPFILA) are cleaved as a signal peptide. Residues asparagine 97 and asparagine 150 are each glycosylated (N-linked (GlcNAc...) asparagine). The Cadherin 1 domain maps to 181–305 (VRENQPAGTR…LDENDNRPIF (125 aa)). 2 N-linked (GlcNAc...) asparagine glycosylation sites follow: asparagine 325 and asparagine 426. Cadherin domains lie at 430 to 543 (HREK…PPYF), 554 to 651 (VQLN…APQF), 660 to 756 (IPEN…APKF), 766 to 858 (VDED…EPKF), 867 to 968 (VDEN…KPVF), 978 to 1078 (VEEG…PPLF), 1087 to 1183 (VKQD…PPVW), 1193 to 1299 (VKEN…IPLF), 1307 to 1414 (VLEG…PPYF), 1423 to 1514 (VDEN…PPVF), 1523 to 1630 (ITEE…APIF), 1639 to 1742 (VTEN…PPQF), 1749 to 1861 (TEVD…KPHF), 1870 to 1966 (VFED…APKF), and 1974 to 2085 (LPEH…QPGS). Asparagine 930 carries an N-linked (GlcNAc...) asparagine glycan. The N-linked (GlcNAc...) asparagine glycan is linked to asparagine 1266. 11 disulfides stabilise this stretch: cysteine 2346–cysteine 2357, cysteine 2351–cysteine 2366, cysteine 2368–cysteine 2377, cysteine 2559–cysteine 2585, cysteine 2592–cysteine 2607, cysteine 2601–cysteine 2616, cysteine 2618–cysteine 2627, cysteine 2787–cysteine 2822, cysteine 2869–cysteine 2880, cysteine 2874–cysteine 2891, and cysteine 2893–cysteine 2902. Residues 2346 to 2377 (CRTTPCHNGGRCVDTRFGPHCSCPVGYTGPRC) form the EGF-like 1 domain. Residues 2379–2585 (QTTRSFRGNG…GLSRNSVAGC (207 aa)) form the Laminin G-like 1 domain. Residues 2592-2627 (CAQTETTARCWEHGNCVGSLSEARCHCRPGWTGPAC) enclose the EGF-like 2 domain. The Laminin G-like 2 domain occupies 2631-2822 (TIPTTFKAQS…TMARNLEKGC (192 aa)). In terms of domain architecture, EGF-like 3 spans 2869-2902 (CLDMPCMNGATCINLEPRLRYRCICPDGFWGENC). A helical transmembrane segment spans residues 2917 to 2937 (ALAAILVCLLIILILVLVFVV). Residues 2938–3097 (YNRRREAHIK…PNPHNTELEL (160 aa)) are Cytoplasmic-facing.

In the embryo, the protein first appears in the mesoderm at stage 9 and is present in the myoblasts and muscle fibers by stage 12 and stage 14, respectively. At stage 12 the protein is also located in the axons of the entire CNS, but not in the glial cells. In third instar larvae protein is expressed in the CNS neuropile, photoreceptor axons and precursors of adult muscles.

Its subcellular location is the cell membrane. Cadherins are calcium-dependent cell adhesion proteins. They preferentially interact with themselves in a homophilic manner in connecting cells; cadherins may thus contribute to the sorting of heterogeneous cell types. May associate with arm neural isoform and participate in the transmission of developmental information. The polypeptide is Neural-cadherin (CadN) (Drosophila melanogaster (Fruit fly)).